Here is a 427-residue protein sequence, read N- to C-terminus: Serine--tRNA ligase (427 aa).

233 to 235 (TAE) provides a ligand contact to L-serine. ATP is bound at residue 264–266 (RSE). Glu287 contacts L-serine. ATP is bound at residue 351 to 354 (EISS). Ser387 contacts L-serine.

The protein belongs to the class-II aminoacyl-tRNA synthetase family. Type-1 seryl-tRNA synthetase subfamily. As to quaternary structure, homodimer. The tRNA molecule binds across the dimer.

Its subcellular location is the cytoplasm. It catalyses the reaction tRNA(Ser) + L-serine + ATP = L-seryl-tRNA(Ser) + AMP + diphosphate + H(+). The enzyme catalyses tRNA(Sec) + L-serine + ATP = L-seryl-tRNA(Sec) + AMP + diphosphate + H(+). The protein operates within aminoacyl-tRNA biosynthesis; selenocysteinyl-tRNA(Sec) biosynthesis; L-seryl-tRNA(Sec) from L-serine and tRNA(Sec): step 1/1. Functionally, catalyzes the attachment of serine to tRNA(Ser). Is also able to aminoacylate tRNA(Sec) with serine, to form the misacylated tRNA L-seryl-tRNA(Sec), which will be further converted into selenocysteinyl-tRNA(Sec). In Buchnera aphidicola subsp. Schizaphis graminum (strain Sg), this protein is Serine--tRNA ligase.